A 471-amino-acid polypeptide reads, in one-letter code: MVQKVEARGGEIGDVWDDGAYDGVRKVYVGQGEDGIAFVKFEYVNGSQEVVGDERGKKTLLGAEEFEVDPDDYIVYVEGYHEKVFGVTTKEIISTLTFKTYKGKTSPPFGIVSGTKFVLQGGKIVGFHGRSTDVLHSLGAYISSPATPKLRGKWIKVEQKGEGPGPRCSHDIAQVGNKIFSFGGELTPNQPIDKHLYVFDLETRTWSISPATGDVPNLSCLGVRMVSIGSSLYVFGGRDASRKYNGFYSFDTTKNEWKLLTPVEQGPTPRSFHSMTADENNVYVFGGVSATVRLKTLDAYNIVDHKWVQCSTPGGSCSVRGGAGLEVVQGKVWVVYGFNGCEVDDVHCYDPAQDKWTQVETFGEKPCARSVFASAVVGKHILVFGGEIAMDPKAHEGPGQLSGGTFALDTETLKWEKLDKLGEEEETPSIRGWSASTTGTIDGKKGLVMFGGKAQTNDRFGDLFFYGVDSA.

Residues valine 2–serine 144 form the Jacalin-type lectin domain. Kelch repeat units lie at residues lysine 178–valine 226, serine 231–alanine 277, asparagine 281–glycine 330, valine 332–lysine 379, isoleucine 381–alanine 435, and glycine 446–alanine 471. Arginine 238 (proton donor) is an active-site residue. A (Z)-N-(sulfonatooxy)alkanimidothioate is bound by residues arginine 238, serine 271, arginine 293, glycine 322, and valine 371. Arginine 293 (proton donor) is an active-site residue. Residues glutamate 387, aspartate 391, and histidine 395 each coordinate Fe(2+). Tryptophan 433 provides a ligand contact to a (Z)-N-(sulfonatooxy)alkanimidothioate.

The protein belongs to the jacalin lectin family. Requires Fe(2+) as cofactor. In terms of tissue distribution, expressed only in seeds.

The enzyme catalyses a (Z)-N-(sulfonatooxy)alkanimidothioate = a nitrile + sulfur + sulfate. It catalyses the reaction (Z)-phenyl-N-(sulfonatooxy)methanimidothioate = phenylacetonitrile + sulfur + sulfate. It carries out the reaction (Z)-N-(sulfonatooxy)prop-2-enimidothioate = but-3-enenitrile + sulfur + sulfate. The catalysed reaction is (Z)-(indol-3-yl)-N-(sulfonatooxy)methanimidothioate = (indol-3-yl)acetonitrile + sulfur + sulfate. With respect to regulation, the presence of Fe(2+) supports lyase activity in a dose-dependent manner with both benzylglucosinolate and 2-propenylglucosinolate as substrates. More active at pH 7.4 than at pH 6. In terms of biological role, specifier protein responsible for constitutive and herbivore-induced simple nitrile formation, especially in seeds. Promotes simple nitriles, but not epithionitrile or thiocyanate formation. Converts allylglucosinolate (allyl-GSL), 2-propenylglucosinolate (sinigrin), indol-3-ylmethylglucosinolate (glucobrassicin), benzylisothiocyanate and benzylglucosinolate (glucotropaeolin) to their corresponding simple nitriles in the presence of myrosinase. Catalyzes mainly the conversion of benzylisothiocyanate when benzylglucosinolate is used as the initial substrate of myrosinase. Involved in the regulation of glucosinolate content in seeds, during stratification and germination. This Arabidopsis thaliana (Mouse-ear cress) protein is Thiohydroximate-O-sulfate sulfur/sulfate-lyase (nitrile-forming) NSP2.